The chain runs to 287 residues: Proline iminopeptidase (287 aa).

Residues 22 to 271 enclose the AB hydrolase-1 domain; sequence PLVLLHGGPG…RSRHMAFIDE (250 aa). The active-site Nucleophile is the S98. D238 is an active-site residue. Catalysis depends on H265, which acts as the Proton donor.

The protein belongs to the peptidase S33 family.

It is found in the cell envelope. The enzyme catalyses Release of N-terminal proline from a peptide.. Functionally, releases the N-terminal proline from various substrates. The sequence is that of Proline iminopeptidase from Lactiplantibacillus plantarum (strain ATCC BAA-793 / NCIMB 8826 / WCFS1) (Lactobacillus plantarum).